A 271-amino-acid polypeptide reads, in one-letter code: Putative glucose-6-phosphate 1-epimerase (271 aa).

Residues Arg71 and Arg93 each contribute to the substrate site. Residue His151 is part of the active site. Asp193 is a substrate binding site. Glu249 is a catalytic residue.

The protein belongs to the glucose-6-phosphate 1-epimerase family.

The enzyme catalyses alpha-D-glucose 6-phosphate = beta-D-glucose 6-phosphate. This Haemophilus influenzae (strain ATCC 51907 / DSM 11121 / KW20 / Rd) protein is Putative glucose-6-phosphate 1-epimerase.